The primary structure comprises 122 residues: S-adenosylmethionine decarboxylase proenzyme (122 aa).

Residue S63 is the Schiff-base intermediate with substrate; via pyruvic acid of the active site. The residue at position 63 (S63) is a Pyruvic acid (Ser); by autocatalysis. H68 functions as the Proton acceptor; for processing activity in the catalytic mechanism. The active-site Proton donor; for catalytic activity is the C83.

It belongs to the prokaryotic AdoMetDC family. Type 1 subfamily. Heterotetramer of two alpha and two beta chains arranged as a dimer of alpha/beta heterodimers. The cofactor is pyruvate. Post-translationally, is synthesized initially as an inactive proenzyme. Formation of the active enzyme involves a self-maturation process in which the active site pyruvoyl group is generated from an internal serine residue via an autocatalytic post-translational modification. Two non-identical subunits are generated from the proenzyme in this reaction, and the pyruvate is formed at the N-terminus of the alpha chain, which is derived from the carboxyl end of the proenzyme. The post-translation cleavage follows an unusual pathway, termed non-hydrolytic serinolysis, in which the side chain hydroxyl group of the serine supplies its oxygen atom to form the C-terminus of the beta chain, while the remainder of the serine residue undergoes an oxidative deamination to produce ammonia and the pyruvoyl group blocking the N-terminus of the alpha chain.

The catalysed reaction is S-adenosyl-L-methionine + H(+) = S-adenosyl 3-(methylsulfanyl)propylamine + CO2. It functions in the pathway amine and polyamine biosynthesis; S-adenosylmethioninamine biosynthesis; S-adenosylmethioninamine from S-adenosyl-L-methionine: step 1/1. Functionally, catalyzes the decarboxylation of S-adenosylmethionine to S-adenosylmethioninamine (dcAdoMet), the propylamine donor required for the synthesis of the polyamines spermine and spermidine from the diamine putrescine. The chain is S-adenosylmethionine decarboxylase proenzyme from Methanococcus maripaludis (strain DSM 14266 / JCM 13030 / NBRC 101832 / S2 / LL).